The sequence spans 295 residues: Mycothiol acetyltransferase (295 aa).

N-acetyltransferase domains follow at residues 5–141 (VEIR…TPLP) and 149–295 (VRLR…MYRR). Position 35 (Glu35) interacts with 1D-myo-inositol 2-(L-cysteinylamino)-2-deoxy-alpha-D-glucopyranoside. 76 to 78 (LVV) contributes to the acetyl-CoA binding site. The 1D-myo-inositol 2-(L-cysteinylamino)-2-deoxy-alpha-D-glucopyranoside site is built by Glu176, Lys215, and Glu229. Residues 233–235 (VGV) and 240–246 (RGTGLGR) contribute to the acetyl-CoA site. Tyr267 is a binding site for 1D-myo-inositol 2-(L-cysteinylamino)-2-deoxy-alpha-D-glucopyranoside. 272-277 (NTAAVR) contributes to the acetyl-CoA binding site.

The protein belongs to the acetyltransferase family. MshD subfamily. Monomer.

It catalyses the reaction 1D-myo-inositol 2-(L-cysteinylamino)-2-deoxy-alpha-D-glucopyranoside + acetyl-CoA = mycothiol + CoA + H(+). In terms of biological role, catalyzes the transfer of acetyl from acetyl-CoA to desacetylmycothiol (Cys-GlcN-Ins) to form mycothiol. The protein is Mycothiol acetyltransferase of Thermobispora bispora (strain ATCC 19993 / DSM 43833 / CBS 139.67 / JCM 10125 / KCTC 9307 / NBRC 14880 / R51).